The sequence spans 401 residues: Phosphoglycerate kinase (401 aa).

Substrate-binding positions include 21–23, Arg-36, 59–62, Arg-116, and Arg-156; these read DLN and HQGR. Residues Glu-331 and 357–360 contribute to the ATP site; that span reads GGDT.

It belongs to the phosphoglycerate kinase family.

The protein resides in the cytoplasm. It catalyses the reaction (2R)-3-phosphoglycerate + ATP = (2R)-3-phospho-glyceroyl phosphate + ADP. It participates in carbohydrate degradation; glycolysis; pyruvate from D-glyceraldehyde 3-phosphate: step 2/5. The polypeptide is Phosphoglycerate kinase (pgk) (Haloarcula vallismortis (Halobacterium vallismortis)).